A 471-amino-acid polypeptide reads, in one-letter code: Putative multidrug resistance protein MdtD (471 aa).

At 1–11 the chain is on the periplasmic side; that stretch reads MTDLPDSTRWQ. A helical membrane pass occupies residues 12–32; it reads LWIVAFGFFMQSLDTTIVNTA. Over 33–48 the chain is Cytoplasmic; that stretch reads LPSMAQSLGESPLHMH. The chain crosses the membrane as a helical span at residues 49 to 69; it reads MVIVSYVLTVAVMLPASGWLA. Topologically, residues 70–76 are periplasmic; it reads DKVGVRN. A helical transmembrane segment spans residues 77-97; the sequence is IFFTAIVLFTLGSLFCALSGT. Residues 98 to 101 lie on the Cytoplasmic side of the membrane; it reads LNEL. The chain crosses the membrane as a helical span at residues 102 to 124; that stretch reads LLARALQGVGGAMMVPVGRLTVM. Topologically, residues 125-137 are periplasmic; sequence KIVPREQYMAAMT. A helical transmembrane segment spans residues 138-158; it reads FVTLPGQVGPLLGPALGGLLV. Residues 159-164 are Cytoplasmic-facing; that stretch reads EYASWH. Residues 165–185 form a helical membrane-spanning segment; the sequence is WIFLINIPVGIIGAIATLMLM. The Periplasmic portion of the chain corresponds to 186–196; it reads PNYTMQTRRFD. The chain crosses the membrane as a helical span at residues 197–217; that stretch reads LSGFLLLAVGMAVLTLALDGS. At 218–224 the chain is on the cytoplasmic side; that stretch reads KGTGLSP. Residues 225–245 traverse the membrane as a helical segment; that stretch reads LAIAGLVAVGVVALVLYLLHA. Residues 246–262 are Periplasmic-facing; that stretch reads RNNNRALFSLKLFRTRT. A helical membrane pass occupies residues 263–283; sequence FSLGLAGSFAGRIGSGMLPFM. At 284–285 the chain is on the cytoplasmic side; the sequence is TP. Residues 286-306 form a helical membrane-spanning segment; it reads VFLQIGLGFSPFHAGLMMIPM. Residues 307 to 341 are Periplasmic-facing; sequence VLGSMGMKRIVVQVVNRFGYRRVLVATTLGLSLVT. Residues 342–362 form a helical membrane-spanning segment; the sequence is LLFMTTALLGWYYVLPFVLFL. The Cytoplasmic portion of the chain corresponds to 363 to 395; that stretch reads QGMVNSTRFSSMNTLTLKDLPDNLASSGNSLLS. A helical membrane pass occupies residues 396-416; the sequence is MIMQLSMSIGVTIAGLLLGLF. The Periplasmic portion of the chain corresponds to 417–430; that stretch reads GSQHISVDSGTTQT. A helical membrane pass occupies residues 431–451; sequence VFMYTWLSMAFIIALPAFIFA. Residues 452 to 471 are Cytoplasmic-facing; the sequence is RVPNDTHQNVAISRRKRSAQ.

The protein belongs to the major facilitator superfamily. TCR/Tet family.

The protein resides in the cell inner membrane. The sequence is that of Putative multidrug resistance protein MdtD from Shigella flexneri.